Consider the following 448-residue polypeptide: Exodeoxyribonuclease 7 large subunit (448 aa).

This sequence belongs to the XseA family. In terms of assembly, heterooligomer composed of large and small subunits.

The protein localises to the cytoplasm. The protein resides in the nucleoid. It catalyses the reaction Exonucleolytic cleavage in either 5'- to 3'- or 3'- to 5'-direction to yield nucleoside 5'-phosphates.. In terms of biological role, bidirectionally degrades single-stranded DNA into large acid-insoluble oligonucleotides, which are then degraded further into small acid-soluble oligonucleotides. The chain is Exodeoxyribonuclease 7 large subunit from Bacillus subtilis (strain 168).